The primary structure comprises 25 residues: C-type natriuretic peptide (25 aa).

The cysteines at positions 9 and 25 are disulfide-linked.

As to expression, venom gland.

Its subcellular location is the secreted. Its function is as follows. Snake venom natriuretic peptide that has a vasorelaxant activity in rat aortic strips and a diuretic potency in anesthetized rats. May act by activating natriuretic receptors (NPR1 and/or NPR2). In Crotalus atrox (Western diamondback rattlesnake), this protein is C-type natriuretic peptide.